The following is a 74-amino-acid chain: Protein krueppel (74 aa).

C2H2-type zinc fingers lie at residues 1–4 (ERTH), 10–32 (FKCP…MRLH), 38–60 (YHCS…LRVH), and 66–74 (YTCEICKAK).

It belongs to the krueppel C2H2-type zinc-finger protein family.

Its subcellular location is the nucleus. Its function is as follows. Krueppel is a gap class segmentation protein. The protein is Protein krueppel (Kr) of Bradysia coprophila (Dark-winged fungus gnat).